We begin with the raw amino-acid sequence, 647 residues long: LIM domain kinase 1 (647 aa).

2 LIM zinc-binding domains span residues 25 to 75 (CASC…CKKD) and 84 to 137 (CHGC…CGQC). The PDZ domain maps to 165-258 (LVSIPASAHG…LLQLTLEHDP (94 aa)). At S210 the chain carries Phosphoserine. Residue T229 is modified to Phosphothreonine. The disordered stretch occupies residues 256–316 (HDPHDSLGHG…SLVSPASQRK (61 aa)). Residues 278–289 (HTPSGQAGSSAR) are compositionally biased toward polar residues. Phosphoserine is present on residues S298, S302, S307, and S310. The residue at position 323 (S323) is a Phosphoserine; by MAPKAPK2. At S337 the chain carries Phosphoserine. Residues 339–604 (LIHGEVLGKG…PSFVKLEQWL (266 aa)) enclose the Protein kinase domain. ATP is bound by residues 345–353 (LGKGCFGQA) and K368. The active site involves D460. A Phosphothreonine; by ROCK1 and PAK1 modification is found at T508.

The protein belongs to the protein kinase superfamily. TKL Ser/Thr protein kinase family. As to quaternary structure, interacts (via LIM domain) with the cytoplasmic domain of NRG1. Interacts with NISCH. Interacts with RLIM and RNF6. Self-associates to form homodimers. Interacts with HSP90AA1; this interaction promotes LIMK1 dimerization and subsequent transphosphorylation. Interacts with CDKN1C. Interacts with SSH1. Interacts with ROCK1. Interacts (via LIM zinc-binding domains) with FAM89B/LRAP25 (via LRR repeat). Forms a tripartite complex with CDC42BPA, CDC42BPB and FAM89B/LRAP25. Autophosphorylated. Phosphorylated on Thr-508 by ROCK1 and PAK1, resulting in activation. Phosphorylated by PAK4 which increases the ability of LIMK1 to phosphorylate cofilin. Phosphorylated at Ser-323 by MAPKAPK2 during activation of VEGFA-induced signaling, which results in activation of LIMK1 and promotion of actin reorganization, cell migration, and tubule formation of endothelial cells. Dephosphorylated and inactivated by SSH1. Phosphorylated by CDC42BP. In terms of processing, ubiquitinated. 'Lys-48'-linked polyubiquitination by RNF6 leads to proteasomal degradation through the 26S proteasome, modulating LIMK1 levels in the growth cone and its effect on axonal outgrowth. Also polyubiquitinated by RLIM.

Its subcellular location is the cytoplasm. It is found in the nucleus. The protein resides in the cytoskeleton. The protein localises to the cell projection. It localises to the lamellipodium. The catalysed reaction is L-seryl-[protein] + ATP = O-phospho-L-seryl-[protein] + ADP + H(+). The enzyme catalyses L-threonyl-[protein] + ATP = O-phospho-L-threonyl-[protein] + ADP + H(+). In terms of biological role, serine/threonine-protein kinase that plays an essential role in the regulation of actin filament dynamics. Acts downstream of several Rho family GTPase signal transduction pathways. Activated by upstream kinases including ROCK1, PAK1 and PAK4, which phosphorylate LIMK1 on a threonine residue located in its activation loop. LIMK1 subsequently phosphorylates and inactivates the actin binding/depolymerizing factors cofilin-1/CFL1, cofilin-2/CFL2 and destrin/DSTN, thereby preventing the cleavage of filamentous actin (F-actin), and stabilizing the actin cytoskeleton. In this way LIMK1 regulates several actin-dependent biological processes including cell motility, cell cycle progression, and differentiation. Phosphorylates TPPP on serine residues, thereby promoting microtubule disassembly. Stimulates axonal outgrowth and may be involved in brain development. This Rattus norvegicus (Rat) protein is LIM domain kinase 1 (Limk1).